The chain runs to 335 residues: Phenylalanine--tRNA ligase alpha subunit (335 aa).

Position 262 (E262) interacts with Mg(2+).

Belongs to the class-II aminoacyl-tRNA synthetase family. Phe-tRNA synthetase alpha subunit type 1 subfamily. In terms of assembly, tetramer of two alpha and two beta subunits. Requires Mg(2+) as cofactor.

The protein resides in the cytoplasm. The enzyme catalyses tRNA(Phe) + L-phenylalanine + ATP = L-phenylalanyl-tRNA(Phe) + AMP + diphosphate + H(+). This is Phenylalanine--tRNA ligase alpha subunit from Prochlorococcus marinus (strain NATL2A).